The chain runs to 341 residues: Zinc transporter 6, chloroplastic (341 aa).

The chain crosses the membrane as a helical span at residues 28–48; it reads IVAVFAIFLTSVFGVWGPVLL. Residues 49 to 61 lie on the Cytoplasmic side of the membrane; sequence AKYFHGKPLYDKA. The helical transmembrane segment at 62–82 threads the bilayer; the sequence is ILVIKCFAAGVILSTSLVHVL. Over 83–102 the chain is Lumenal; sequence PEAFESLADCQVSSRHPWKD. A helical membrane pass occupies residues 103–123; it reads FPFAGLVTMIGAITALLVDLT. Residues 124–179 lie on the Cytoplasmic side of the membrane; the sequence is ASEHMGHGGGGGGDGGMEYMPVGKAVGGLEMKEGKCGADLEIQENSEEEIVKMKQR. The chain crosses the membrane as a helical span at residues 180–200; that stretch reads LVSQVLEIGIIFHSVIIGVTM. The Lumenal segment spans residues 201–211; the sequence is GMSQNKCTIRP. A helical transmembrane segment spans residues 212 to 232; it reads LIAALSFHQIFEGLGLGGCIA. Topologically, residues 233–243 are cytoplasmic; that stretch reads QAGFKAGTVVY. A helical membrane pass occupies residues 244-264; that stretch reads MCLMFAVTTPLGIVLGMVIFA. Topologically, residues 265-280 are lumenal; it reads ATGYDDQNPNALIMEG. A helical membrane pass occupies residues 281–301; it reads LLGSFSSGILIYMALVDLIAL. At 302–320 the chain is on the cytoplasmic side; the sequence is DFFHNKMLTTCGESGSRLK. A helical membrane pass occupies residues 321–341; that stretch reads KLCFVALVLGSASMSLLALWA.

This sequence belongs to the ZIP transporter (TC 2.A.5) family.

It is found in the plastid. The protein resides in the chloroplast thylakoid membrane. In terms of biological role, may play a role in the transport of zinc in the plastids. This chain is Zinc transporter 6, chloroplastic (ZIP6), found in Arabidopsis thaliana (Mouse-ear cress).